A 117-amino-acid chain; its full sequence is Biogenesis of lysosome-related organelles complex 1 subunit BLS1 (117 aa).

The disordered stretch occupies residues 97-117 (EGKAQDTEQAPGKGDRIFRSD).

It belongs to the BLOC1S1 family. As to quaternary structure, component of the biogenesis of lysosome-related organelles complex-1 (BLOC-1).

It is found in the endosome. Functionally, component of the biogenesis of lysosome-related organelles complex-1 (BLOC-1), a complex involved in endosomal cargo sorting. The protein is Biogenesis of lysosome-related organelles complex 1 subunit BLS1 (BLS1) of Eremothecium gossypii (strain ATCC 10895 / CBS 109.51 / FGSC 9923 / NRRL Y-1056) (Yeast).